A 138-amino-acid polypeptide reads, in one-letter code: MVMQRTFVMIKPDGVKRGLIGEIISRFEKRGLKIVSLKMVKMSRDIAEKLYDEHKGKSFFEELVNYVTSGPVVCMVIEGDDVVQVIRRMIGNTDPKEAPPGTIRGDYALSKSENVIHASDSIEKAQREMSLFFDKSDL.

Lys-11, Phe-59, Arg-87, Thr-93, Arg-104, and Asn-114 together coordinate ATP. The active-site Pros-phosphohistidine intermediate is His-117.

This sequence belongs to the NDK family. Requires Mg(2+) as cofactor.

The protein resides in the cytoplasm. The catalysed reaction is a 2'-deoxyribonucleoside 5'-diphosphate + ATP = a 2'-deoxyribonucleoside 5'-triphosphate + ADP. It carries out the reaction a ribonucleoside 5'-diphosphate + ATP = a ribonucleoside 5'-triphosphate + ADP. In terms of biological role, major role in the synthesis of nucleoside triphosphates other than ATP. The ATP gamma phosphate is transferred to the NDP beta phosphate via a ping-pong mechanism, using a phosphorylated active-site intermediate. The protein is Nucleoside diphosphate kinase of Saccharolobus islandicus (strain Y.N.15.51 / Yellowstone #2) (Sulfolobus islandicus).